The following is a 188-amino-acid chain: UPF0157 protein DR_2534 (188 aa).

A compositionally biased stretch (gly residues) spans methionine 1 to arginine 12. The tract at residues methionine 1–aspartate 37 is disordered.

It belongs to the UPF0157 (GrpB) family.

The chain is UPF0157 protein DR_2534 from Deinococcus radiodurans (strain ATCC 13939 / DSM 20539 / JCM 16871 / CCUG 27074 / LMG 4051 / NBRC 15346 / NCIMB 9279 / VKM B-1422 / R1).